The chain runs to 150 residues: Cytochrome c oxidase subunit 5A, mitochondrial (150 aa).

The N-terminal 41 residues, 1-41, are a transit peptide targeting the mitochondrion; that stretch reads MLGAALRRCAVAATARAGPRGLLHSAPTPGPAAAIQSVRCY. The SIFI-degron signature appears at 2 to 17; it reads LGAALRRCAVAATARA. N6-acetyllysine occurs at positions 87 and 113. At threonine 141 the chain carries Phosphothreonine.

The protein belongs to the cytochrome c oxidase subunit 5A family. Component of the cytochrome c oxidase (complex IV, CIV), a multisubunit enzyme composed of 14 subunits. The complex is composed of a catalytic core of 3 subunits MT-CO1, MT-CO2 and MT-CO3, encoded in the mitochondrial DNA, and 11 supernumerary subunits COX4I, COX5A, COX5B, COX6A, COX6B, COX6C, COX7A, COX7B, COX7C, COX8 and NDUFA4, which are encoded in the nuclear genome. The complex exists as a monomer or a dimer and forms supercomplexes (SCs) in the inner mitochondrial membrane with NADH-ubiquinone oxidoreductase (complex I, CI) and ubiquinol-cytochrome c oxidoreductase (cytochrome b-c1 complex, complex III, CIII), resulting in different assemblies (supercomplex SCI(1)III(2)IV(1) and megacomplex MCI(2)III(2)IV(2)). Interacts with AFG1L. Interacts with RAB5IF. In response to mitochondrial stress, the precursor protein is ubiquitinated by the SIFI complex in the cytoplasm before mitochondrial import, leading to its degradation. Within the SIFI complex, UBR4 initiates ubiquitin chain that are further elongated or branched by KCMF1.

The protein resides in the mitochondrion inner membrane. The protein operates within energy metabolism; oxidative phosphorylation. Its function is as follows. Component of the cytochrome c oxidase, the last enzyme in the mitochondrial electron transport chain which drives oxidative phosphorylation. The respiratory chain contains 3 multisubunit complexes succinate dehydrogenase (complex II, CII), ubiquinol-cytochrome c oxidoreductase (cytochrome b-c1 complex, complex III, CIII) and cytochrome c oxidase (complex IV, CIV), that cooperate to transfer electrons derived from NADH and succinate to molecular oxygen, creating an electrochemical gradient over the inner membrane that drives transmembrane transport and the ATP synthase. Cytochrome c oxidase is the component of the respiratory chain that catalyzes the reduction of oxygen to water. Electrons originating from reduced cytochrome c in the intermembrane space (IMS) are transferred via the dinuclear copper A center (CU(A)) of subunit 2 and heme A of subunit 1 to the active site in subunit 1, a binuclear center (BNC) formed by heme A3 and copper B (CU(B)). The BNC reduces molecular oxygen to 2 water molecules using 4 electrons from cytochrome c in the IMS and 4 protons from the mitochondrial matrix. The polypeptide is Cytochrome c oxidase subunit 5A, mitochondrial (COX5A) (Cebuella pygmaea (Pygmy marmoset)).